A 101-amino-acid polypeptide reads, in one-letter code: RNA-binding protein Hfq (101 aa).

The Sm domain occupies 9–68; the sequence is DPFLNALRRERVPVSIYLVNGIKLQGQVESFDQFVILLKNTVSQMVYKHAISTVVPSRPV. The segment at 63 to 101 is disordered; sequence VPSRPVSHHSNTPSGSTNNYHGSNPSAPQQPQQDSDDAE. Polar residues predominate over residues 70 to 86; it reads HHSNTPSGSTNNYHGSN.

The protein belongs to the Hfq family. In terms of assembly, homohexamer.

RNA chaperone that binds small regulatory RNA (sRNAs) and mRNAs to facilitate mRNA translational regulation in response to envelope stress, environmental stress and changes in metabolite concentrations. Also binds with high specificity to tRNAs. The sequence is that of RNA-binding protein Hfq from Yersinia pseudotuberculosis serotype O:1b (strain IP 31758).